A 417-amino-acid polypeptide reads, in one-letter code: Calreticulin (417 aa).

The signal sequence occupies residues 1–17 (MLLSVPLLLGLLGLAAA). The N-domain stretch occupies residues 18–197 (EPAVYFKEQF…NSQVESGSLE (180 aa)). Residue Gln26 participates in Ca(2+) binding. Lys48 is modified (N6-acetyllysine). Positions 62 and 64 each coordinate Ca(2+). A disulfide bridge connects residues Cys105 and Cys137. An alpha-D-glucoside is bound by residues Tyr109, Lys111, Tyr128, and Asp135. Residue Lys159 is modified to N6-acetyllysine. One copy of the 1-1 repeat lies at 191 to 202 (VESGSLEDDWDF). The 4 X approximate repeats stretch occupies residues 191-255 (VESGSLEDDW…DAKKPEDWDE (65 aa)). Residues 193 to 278 (SGSLEDDWDF…PEYKGEWKPR (86 aa)) are disordered. Residues 198 to 308 (DDWDFLPPKK…YSPDPSIYAY (111 aa)) form a P-domain region. Positions 207 to 251 (KIKDPDASKPEDWDERAKIDDPTDSKPEDWDKPEHIPDPDAKKPE) are enriched in basic and acidic residues. Lys209 is subject to N6-acetyllysine. 6 tandem repeats follow at residues 210-221 (DPDASKPEDWDE), 227-238 (DPTDSKPEDWDK), 244-255 (DPDAKKPEDWDE), 259-269 (GEWEPPVIQNP), 273-283 (GEWKPRQIDNP), and 287-297 (GTWIHPEIDNP). The interval 237-270 (DKPEHIPDPDAKKPEDWDEEMDGEWEPPVIQNPE) is interaction with PPIB. Residues 252–261 (DWDEEMDGEW) are compositionally biased toward acidic residues. The 3 X approximate repeats stretch occupies residues 259–297 (GEWEPPVIQNPEYKGEWKPRQIDNPDYKGTWIHPEIDNP). Positions 309 to 417 (DNFGVLGLDL…DVPGQAKDEL (109 aa)) are C-domain. Residue Asp317 participates in an alpha-D-glucoside binding. Asp328 provides a ligand contact to Ca(2+). The segment at 350–417 (TKAAEKQMKD…DVPGQAKDEL (68 aa)) is disordered. The segment covering 352-379 (AAEKQMKDKQDEEQRLKEEEEDKKRKEE) has biased composition (basic and acidic residues). Positions 380–409 (EEAEDKEDDEDKDEDEEDEEDKEEDEEEDV) are enriched in acidic residues. Positions 414 to 417 (KDEL) match the Prevents secretion from ER motif.

This sequence belongs to the calreticulin family. Monomer. Component of an EIF2 complex at least composed of CELF1/CUGBP1, CALR, CALR3, EIF2S1, EIF2S2, HSP90B1 and HSPA5. Interacts with PDIA3/ERp57 and SPACA9. Interacts with TRIM21. Interacts with NR3C1. Interacts with PPIB. Interacts (via P-domain) with PDIA5. Interacts with GABARAP. Interacts with CLCC1.

It localises to the endoplasmic reticulum lumen. The protein localises to the cytoplasm. Its subcellular location is the cytosol. The protein resides in the secreted. It is found in the extracellular space. It localises to the extracellular matrix. The protein localises to the cell surface. Its subcellular location is the sarcoplasmic reticulum lumen. The protein resides in the cytoplasmic vesicle. It is found in the secretory vesicle. It localises to the cortical granule. The protein localises to the cytoplasmic granule. Functionally, calcium-binding chaperone that promotes folding, oligomeric assembly and quality control in the endoplasmic reticulum (ER) via the calreticulin/calnexin cycle. This lectin interacts transiently with almost all of the monoglucosylated glycoproteins that are synthesized in the ER. Interacts with the DNA-binding domain of NR3C1 and mediates its nuclear export. Involved in maternal gene expression regulation. May participate in oocyte maturation via the regulation of calcium homeostasis. The sequence is that of Calreticulin (CALR) from Chlorocebus aethiops (Green monkey).